We begin with the raw amino-acid sequence, 80 residues long: Lantibiotic Flvalpha.c (80 aa).

A propeptide spans 1-38 (MNKNPIYRSEEEAKNIACGNVAAELDENSQALDAINGA) (cleaved by FlvT). 2,3-didehydrobutyrine; by FlvM1 is present on residues Thr43 and Thr47. The beta-methyllanthionine (Thr-Cys); by FlvM1 cross-link spans 52-55 (TLGC). The segment at residues 58–68 (SYGLGNGGYCC) is a cross-link (lanthionine (Ser-Cys); by FlvM1). 2 cross-links (beta-methyllanthionine (Thr-Cys); by FlvM1) span residues 69–74 (TYTVEC) and 71–78 (TVECSKTC).

Post-translationally, the lanthionine formed by Ser-58 and Cys-68 forms a putative lipid II binding motif. Maturation of FlvA1 peptides involves the enzymatic conversion of Thr, and Ser into dehydrated AA and the formation of thioether bonds with cysteines. Modifications are processed by the flavecin synthetase FlvM1. This is followed by membrane translocation and cleavage of the modified precursor. In terms of processing, contains DL-lanthionine and DL-beta-methyllanthionine, when coepressed in E.coli with the flavecin synthetase FlvM1.

It localises to the secreted. Its function is as follows. Lanthionine-containing peptide antibiotic (lantibiotic) only active on Gram-positive bacteria in synergy with Flvbeta peptides, which are encoded by the same operon than Flvalpha.a. Shows antibacterial activity in synergy with Flvbeta.b, Flvbeta.c, Flvbeta.e and Flvbeta.g. Does not show antibacterial activity when tested with Flvbeta.a, Flvbeta.d, Flvbeta.f and Flvbeta.h. The bactericidal activity of lantibiotics is based on depolarization of energized bacterial cytoplasmic membranes, initiated by the formation of aqueous transmembrane pores. This Ruminococcus flavefaciens protein is Lantibiotic Flvalpha.c.